The chain runs to 78 residues: MKLTCVLIIAVLCLTVCQLITADYLRDKQKYRSVRLRDGMLNFKGSRQCADLGEECYTRFCCPGLRCKDLQVPTCLLA.

The N-terminal stretch at Met-1 to Ala-22 is a signal peptide. Positions Asp-23–Arg-47 are excised as a propeptide. Gln-48 is modified (pyrrolidone carboxylic acid). Cystine bridges form between Cys-49-Cys-62, Cys-56-Cys-67, and Cys-61-Cys-75.

It belongs to the conotoxin O1 superfamily. In terms of tissue distribution, expressed by the venom duct.

The protein resides in the secreted. This Conus arenatus (Sand-dusted cone) protein is Conotoxin ArMKLT2-0313.